The primary structure comprises 462 residues: Argininosuccinate lyase (462 aa).

It belongs to the lyase 1 family. Argininosuccinate lyase subfamily.

It is found in the cytoplasm. The enzyme catalyses 2-(N(omega)-L-arginino)succinate = fumarate + L-arginine. It functions in the pathway amino-acid biosynthesis; L-arginine biosynthesis; L-arginine from L-ornithine and carbamoyl phosphate: step 3/3. The polypeptide is Argininosuccinate lyase (Bacillus cereus (strain ATCC 14579 / DSM 31 / CCUG 7414 / JCM 2152 / NBRC 15305 / NCIMB 9373 / NCTC 2599 / NRRL B-3711)).